Consider the following 610-residue polypeptide: Estrogen receptor beta-2 (610 aa).

The segment at 1-170 (MSSSTGPAPA…GILGKGDTHF (170 aa)) is modulating. 2 NR C4-type zinc fingers span residues 171-191 (CAVC…CEGC) and 207-231 (CPAT…LRKC). Positions 171 to 236 (CAVCHDYASG…RLRKCYEVGM (66 aa)) form a DNA-binding region, nuclear receptor. The 237-residue stretch at 302-538 (SPEQLVNCIL…DLLLEMLDAN (237 aa)) folds into the NR LBD domain. The segment at 566-596 (HTSKQQPALKESNQDTRHSPQAEGTVDKTLH) is disordered. The span at 577–596 (SNQDTRHSPQAEGTVDKTLH) shows a compositional bias: basic and acidic residues.

It belongs to the nuclear hormone receptor family. NR3 subfamily. As to quaternary structure, binds DNA as a homodimer. Can form a heterodimer with ER-alpha. In terms of tissue distribution, predominantly expressed in pituitary, telencephalon and hypothalamus as well as in the liver.

Its subcellular location is the nucleus. Its function is as follows. Binds estrogens with an affinity similar to that of ER-alpha, and activates expression of reporter genes containing estrogen response elements (ERE) in an estrogen-dependent manner. This is Estrogen receptor beta-2 (esr2b) from Carassius auratus (Goldfish).